The primary structure comprises 141 residues: Hemoglobin subunit beta (141 aa).

Residues 2–141 form the Globin domain; sequence HWSEVELHEI…VVDAISKEYH (140 aa). The heme b site is built by H58 and H87.

Belongs to the globin family. In terms of assembly, heterotetramer of two alpha chains and two beta chains. In terms of tissue distribution, red blood cells.

Its function is as follows. Involved in oxygen transport from the lung to the various peripheral tissues. The protein is Hemoglobin subunit beta (HBB) of Heterodontus portusjacksoni (Port Jackson shark).